Consider the following 345-residue polypeptide: Ferrochelatase (345 aa).

Fe cation-binding residues include histidine 215 and glutamate 296.

This sequence belongs to the ferrochelatase family.

Its subcellular location is the cytoplasm. It carries out the reaction heme b + 2 H(+) = protoporphyrin IX + Fe(2+). It participates in porphyrin-containing compound metabolism; protoheme biosynthesis; protoheme from protoporphyrin-IX: step 1/1. Functionally, catalyzes the ferrous insertion into protoporphyrin IX. In Nitrobacter hamburgensis (strain DSM 10229 / NCIMB 13809 / X14), this protein is Ferrochelatase.